A 499-amino-acid chain; its full sequence is Glutamate--tRNA ligase (499 aa).

The short motif at 12–22 is the 'HIGH' region element; the sequence is PSPTGHLHIGN. Positions 259–263 match the 'KMSKS' region motif; the sequence is KLSKR. Residue Lys262 coordinates ATP.

This sequence belongs to the class-I aminoacyl-tRNA synthetase family. Glutamate--tRNA ligase type 1 subfamily. Monomer.

The protein localises to the cytoplasm. The catalysed reaction is tRNA(Glu) + L-glutamate + ATP = L-glutamyl-tRNA(Glu) + AMP + diphosphate. Its function is as follows. Catalyzes the attachment of glutamate to tRNA(Glu) in a two-step reaction: glutamate is first activated by ATP to form Glu-AMP and then transferred to the acceptor end of tRNA(Glu). This is Glutamate--tRNA ligase from Lactobacillus acidophilus (strain ATCC 700396 / NCK56 / N2 / NCFM).